We begin with the raw amino-acid sequence, 435 residues long: Nuclear distribution protein nudF 2 (435 aa).

The 33-residue stretch at 9 to 41 folds into the LisH domain; the sequence is QAEELHKSIIAYLSANGLPETTAILRKELGVTE. WD repeat units follow at residues 86 to 125, 128 to 171, 175 to 214, 217 to 256, 280 to 320, 322 to 361, 366 to 396, and 397 to 434; these read SHRDTINCIAFHPKYSSIASGSDDCTIKIWDWELGELEVT, GHTR…KNIR, GHDHIVSAVRFIPNGSLLASASRDMDVRLWDVTNGYCVKT, GHTGWVRDVCASLDGRFILSTGDDMTVRLWDISAKPENKL, APLA…LMTL, GHDNWVRAIVFHPGGRYLLSVSDDKTLRCWDLSQEGKCVK, THGGFITCLRWAPAILKDTPTDAARALVRQI, and PDVAEIMKNATFEESFSDVQIRCVVATGSVDKKLQIFA.

It belongs to the WD repeat LIS1/nudF family. As to quaternary structure, self-associates. Interacts with nudE and dynein.

The protein localises to the cytoplasm. It localises to the cytoskeleton. It is found in the spindle pole. In terms of biological role, positively regulates the activity of the minus-end directed microtubule motor protein dynein. May enhance dynein-mediated microtubule sliding by targeting dynein to the microtubule plus end. Required for nuclear migration during vegetative growth as well as development. Required for retrograde early endosome (EE) transport from the hyphal tip. Required for localization of dynein to the mitotic spindle poles. Recruits additional proteins to the dynein complex at SPBs. The sequence is that of Nuclear distribution protein nudF 2 from Aspergillus clavatus (strain ATCC 1007 / CBS 513.65 / DSM 816 / NCTC 3887 / NRRL 1 / QM 1276 / 107).